The following is a 607-amino-acid chain: Glutamine--fructose-6-phosphate aminotransferase [isomerizing] (607 aa).

Catalysis depends on Cys2, which acts as the Nucleophile; for GATase activity. Positions 2 to 217 (CGIIGIIGND…DGDWAVLTRN (216 aa)) constitute a Glutamine amidotransferase type-2 domain. SIS domains lie at 283–422 (IGID…ARGA) and 455–597 (VCHD…VDQP). Lys602 functions as the For Fru-6P isomerization activity in the catalytic mechanism.

Homodimer.

The protein localises to the cytoplasm. The catalysed reaction is D-fructose 6-phosphate + L-glutamine = D-glucosamine 6-phosphate + L-glutamate. Catalyzes the first step in hexosamine metabolism, converting fructose-6P into glucosamine-6P using glutamine as a nitrogen source. This chain is Glutamine--fructose-6-phosphate aminotransferase [isomerizing], found in Brucella suis biovar 1 (strain 1330).